Here is an 801-residue protein sequence, read N- to C-terminus: DNA mismatch repair protein MutS (801 aa).

590–597 (GPNMSGKS) is a binding site for ATP.

This sequence belongs to the DNA mismatch repair MutS family.

In terms of biological role, this protein is involved in the repair of mismatches in DNA. It is possible that it carries out the mismatch recognition step. This protein has a weak ATPase activity. This is DNA mismatch repair protein MutS from Thermotoga neapolitana (strain ATCC 49049 / DSM 4359 / NBRC 107923 / NS-E).